Reading from the N-terminus, the 241-residue chain is DNA repair protein RecO (241 aa).

Belongs to the RecO family.

In terms of biological role, involved in DNA repair and RecF pathway recombination. In Rickettsia canadensis (strain McKiel), this protein is DNA repair protein RecO.